The primary structure comprises 132 residues: MTATTSKRKKYVREMKPTWWKKLDFYKLYIAREATAIPTLWFCLVLLYGVISLGSLDSFGNFISFLKNPIVIILNIITLGAMLLNTVTYYVMTPKVLNIIVKNERINPNIITMALWAVTAFISLVILVFMYV.

Transmembrane regions (helical) follow at residues 36-56, 70-90, and 110-130; these read AIPT…LGSL, IVII…VTYY, and IITM…LVFM.

This sequence belongs to the FrdC family. As to quaternary structure, part of an enzyme complex containing four subunits: a flavoprotein (FrdA), an iron-sulfur protein (FrdB), and two hydrophobic anchor proteins (FrdC and FrdD).

The protein resides in the cell inner membrane. Anchors the catalytic components of the fumarate reductase complex to the cell membrane, binds quinones. The chain is Fumarate reductase subunit C from Pasteurella multocida (strain Pm70).